Reading from the N-terminus, the 80-residue chain is CLAVATA3/ESR (CLE)-related protein 14 (80 aa).

The signal sequence occupies residues 1–26; the sequence is MKVWSQRLSFLIVMIFILAGLHSSSA. Hydroxyproline is present on residues proline 71 and proline 74. Proline 74 is a glycosylation site (O-linked (Ara...) hydroxyproline).

Belongs to the CLV3/ESR signal peptide family. In terms of assembly, interacts with the extracellular leucine-rich repeat region of CLV2 and PEPR2. In terms of processing, the O-glycosylation (arabinosylation) of the hydroxyproline Pro-74 enhances binding affinity of the CLE14p peptide for its receptor. As to expression, mostly expressed in roots, and, to a lower extent, in seedlings and leaves. Expressed in the primary root tip under Pi deficiency.

It localises to the secreted. The protein localises to the extracellular space. Extracellular signal peptide that regulates cell fate. Represses root apical meristem maintenance. Acts as an elicitor of the root meristem differentiation through the CLV2/CRN complex signaling pathway. Inhibits irreversibly root growth by reducing cell division rates in the root apical meristem. Regulates the transition of protophloem cells from proliferation to differentiation, thus impinging on postembryonic growth capacity of the root meristem; this signaling pathway requires CRN and CLV2. The polypeptide is CLAVATA3/ESR (CLE)-related protein 14 (Arabidopsis thaliana (Mouse-ear cress)).